A 309-amino-acid chain; its full sequence is Porphobilinogen deaminase (309 aa).

Cys244 is subject to S-(dipyrrolylmethanemethyl)cysteine.

The protein belongs to the HMBS family. In terms of assembly, monomer. The cofactor is dipyrromethane.

The catalysed reaction is 4 porphobilinogen + H2O = hydroxymethylbilane + 4 NH4(+). It functions in the pathway porphyrin-containing compound metabolism; protoporphyrin-IX biosynthesis; coproporphyrinogen-III from 5-aminolevulinate: step 2/4. Functionally, tetrapolymerization of the monopyrrole PBG into the hydroxymethylbilane pre-uroporphyrinogen in several discrete steps. This Listeria monocytogenes serotype 4b (strain CLIP80459) protein is Porphobilinogen deaminase.